A 716-amino-acid polypeptide reads, in one-letter code: Polycystin-2 (716 aa).

2 stretches are compositionally biased toward basic and acidic residues: residues 1–10 (MNYGAADERW) and 30–41 (MVSEEYEHDKKK). The segment at 1 to 44 (MNYGAADERWANPPQPVAAAEHGPSFDHSMVSEEYEHDKKKNPA) is disordered. Over 1-72 (MNYGAADERW…SDGKIKLTAR (72 aa)) the chain is Cytoplasmic. Residues 73 to 93 (SFMEVGGYAVFLIVLVYVAFA) traverse the membrane as a helical segment. Topologically, residues 94-324 (QNSIQSYYYS…YQTSGGTRMM (231 aa)) are extracellular. N-linked (GlcNAc...) asparagine glycosylation is found at asparagine 150 and asparagine 177. Cysteine 180 and cysteine 193 are disulfide-bonded. A helical membrane pass occupies residues 325 to 345 (IFEGIFCGFILYFIFEELFAI). Over 346-355 (GRHRLHYLTQ) the chain is Cytoplasmic. A helical membrane pass occupies residues 356 to 376 (FWNLVDVVLLGFSVATIILSV). An N-linked (GlcNAc...) asparagine glycan is attached at asparagine 377. Residues 377-409 (NRTKTGVNRVNSVIENGLTNAPFDDVTSSENSY) are Extracellular-facing. A helical membrane pass occupies residues 410–430 (LNIKACVVFVAWVKVFKFISV). At 431–447 (NKTMSQLSSTLTRSAKD) the chain is on the cytoplasmic side. A helical membrane pass occupies residues 448-468 (IGGFAVMFAVFFFAFAQFGYL). Residues 469-482 (CFGTQIADYSNLYN) are Extracellular-facing. Positions 483–497 (SAFALLRLILGDFNF) form an intramembrane region, pore-forming. Over 498 to 510 (SALESCNRFFGPA) the chain is Extracellular. A helical membrane pass occupies residues 511–531 (FFIAYVFFVSFILLNMFLAII). Residues 532–716 (NDSYVEVKAE…ITSIADKKEE (185 aa)) lie on the Cytoplasmic side of the membrane. Serine 534 carries the post-translational modification Phosphoserine; by CK2. A coiled-coil region spans residues 613-680 (EKVAEDIADE…IEKQRVQQQD (68 aa)). The tract at residues 696 to 716 (RNRESAARRPTITSIADKKEE) is disordered.

The protein belongs to the polycystin family. In terms of processing, phosphorylated. CK2 (kin-3 and kin-10) and calcineurin act antagonistically to regulate the phosphorylation state. In terms of tissue distribution, exclusively expressed in a subset of 3 categories of adult male sensory neurons: ray neurons, hook neurons and head cephalic (CEM) neurons. Expressed in the male tail.

The protein resides in the cell membrane. Its subcellular location is the cell projection. It localises to the cilium membrane. The protein localises to the cilium. It is found in the axon. The protein resides in the dendrite. Its subcellular location is the perikaryon. It localises to the endoplasmic reticulum membrane. Functions as a calcium permeable cation channel. Required for 2 aspects of male mating behavior: response to hermaphrodite contact and vulva location. Acts in the same pathway as lov-1 and atp-2 in response behavior. The sequence is that of Polycystin-2 from Caenorhabditis elegans.